Reading from the N-terminus, the 337-residue chain is G-protein coupled receptor 26 (337 aa).

Over 1–10 (MNSWDAGLAG) the chain is Extracellular. A helical transmembrane segment spans residues 11 to 31 (LLVGTMGVSLLSNALVLLCLL). Over 32–47 (HSADIRRQAPALFTLN) the chain is Cytoplasmic. A helical transmembrane segment spans residues 48–68 (LTCGNLLCTVVNMPLTLAGVV). At 69–81 (AQRQPAGDRLCRL) the chain is on the extracellular side. A disulfide bridge links C79 with C156. A helical membrane pass occupies residues 82–102 (AAFLDTFLAANSMLSMAALSI). Over 103–123 (DRWVAVVFPLSYRAKMRLRDA) the chain is Cytoplasmic. The chain crosses the membrane as a helical span at residues 124 to 144 (ALMVAYTWLHALTFPAAALAL). Residues 145 to 168 (SWLGFHQLYASCTLCSRRPDERLR) are Extracellular-facing. The helical transmembrane segment at 169 to 189 (FAVFTGAFHALSFLLSFVVLC) threads the bilayer. Over 190–245 (CTYLKVLKVARFHCKRIDVITMQTLVLLVDLHPSVRERCLEEQKRRRQRATKKIST) the chain is Cytoplasmic. Residues 246–266 (FIGTFLVCFAPYVITRLVELF) form a helical membrane-spanning segment. The Extracellular portion of the chain corresponds to 267–276 (STVPIGSHWG). The helical transmembrane segment at 277 to 297 (VLSKCLAYSKAASDPFVYSLL) threads the bilayer. Topologically, residues 298–337 (RHQYRKSCKEILNRLLHRRSIHSSGLTGDSHSQNILPVSE) are cytoplasmic.

It belongs to the G-protein coupled receptor 1 family. In terms of tissue distribution, highly expressed in the CNS, the highest expression is seen in the amygdala, hippocampus and thalamus. Weak expression is detected in testis. Down-regulated in glioblastoma.

The protein resides in the cell membrane. In terms of biological role, orphan receptor. Displays a significant level of constitutive activity. Its effect is mediated by G(s)-alpha protein that stimulate adenylate cyclase, resulting in an elevation of intracellular cAMP. This is G-protein coupled receptor 26 (GPR26) from Homo sapiens (Human).